A 266-amino-acid chain; its full sequence is Ribonuclease 3 (266 aa).

In terms of domain architecture, RNase III spans 34-158 (IERCQEILGY…VIAALYIDGG (125 aa)). Residue E72 participates in Mg(2+) binding. D76 is an active-site residue. Mg(2+) is bound by residues D144 and E147. The active site involves E147. Positions 185–254 (NHKSVLQQFA…AANALAELHN (70 aa)) constitute a DRBM domain.

The protein belongs to the ribonuclease III family. In terms of assembly, homodimer. Mg(2+) is required as a cofactor.

The protein resides in the cytoplasm. It catalyses the reaction Endonucleolytic cleavage to 5'-phosphomonoester.. Digests double-stranded RNA. Involved in the processing of primary rRNA transcript to yield the immediate precursors to the large and small rRNAs (23S and 16S). Processes some mRNAs, and tRNAs when they are encoded in the rRNA operon. Processes pre-crRNA and tracrRNA of type II CRISPR loci if present in the organism. The protein is Ribonuclease 3 of Rhodopirellula baltica (strain DSM 10527 / NCIMB 13988 / SH1).